The following is a 482-amino-acid chain: Putative transposase R186 (482 aa).

4 residues coordinate Zn(2+): C416, C419, C433, and C435.

It in the central section; belongs to the transposase 2 family. The protein in the C-terminal section; belongs to the transposase 35 family.

The protein is Putative transposase R186 of Acanthamoeba polyphaga (Amoeba).